We begin with the raw amino-acid sequence, 371 residues long: Ferrochelatase (371 aa).

Residues His218 and Glu299 each coordinate Fe cation.

The protein belongs to the ferrochelatase family.

The protein resides in the cytoplasm. The enzyme catalyses heme b + 2 H(+) = protoporphyrin IX + Fe(2+). It participates in porphyrin-containing compound metabolism; protoheme biosynthesis; protoheme from protoporphyrin-IX: step 1/1. Functionally, catalyzes the ferrous insertion into protoporphyrin IX. The polypeptide is Ferrochelatase (Cupriavidus pinatubonensis (strain JMP 134 / LMG 1197) (Cupriavidus necator (strain JMP 134))).